Here is a 618-residue protein sequence, read N- to C-terminus: Ubiquitin carboxyl-terminal hydrolase 2 (618 aa).

The interval 1–213 (MSQLSSTLKR…RSEYLTDYLE (213 aa)) is necessary for interaction with MDM4. Disordered regions lie at residues 54 to 112 (VSPT…GGSG) and 246 to 274 (RYTL…MNSK). Residues 90-100 (KRSESQTRGNE) show a composition bias toward basic and acidic residues. The span at 255–274 (GQASGPSRSTSPGRDTMNSK) shows a compositional bias: polar residues. The region spanning 280 to 612 (AGLRNLGNTC…DAYLLFYELA (333 aa)) is the USP domain. Catalysis depends on Cys-289, which acts as the Nucleophile. The segment at 416–516 (YLEREDSRIG…FPKILVLHLK (101 aa)) is necessary for interaction with MDM4. Zn(2+)-binding residues include Cys-438, Cys-441, Cys-489, and Cys-492. The Proton acceptor role is filled by His-570.

It belongs to the peptidase C19 family. USP2 subfamily. As to quaternary structure, homooligomer. Found in trimeric complex with MDM2 and MDM4 and USP2. Interacts with CCND1; the interaction is direct and promotes its stabilization by antagonizing ubiquitin-dependent degradation. Interacts (via N-terminus and C-terminus) with MDM2. Interacts with MDM4. Interacts with PER1. Interacts with KCNQ1; counteracts the NEDD4L-specific down-regulation of I(Ks) and restores plasma membrane localization of KCNQ1. Isoform 4: Interacts with NHERF4 and CLTC. In terms of tissue distribution, expressed in mesangial cells of the kidney. Isoform 1 and isoform 2 are expressed in elongated spermatids; the shorter form appearing earlier than the longer form (at protein level). Isoform 1 and isoform 2 are expressed in early round spermatids of the testis. Isoform 1 is expressed in muscle and heart. Isoform 2 is expressed in muscle, lung, heart, brain, liver and ovary. During muscle differentiation, isoform 1 expression increases before the onset of membrane fusion and decreases as the myogenic processes proceeded; un counterpart, isoform 2 expression remains low until the burst of membrane fusion but increases thereafter.

It is found in the cytoplasm. Its subcellular location is the perinuclear region. The protein localises to the nucleus. It localises to the membrane. The catalysed reaction is Thiol-dependent hydrolysis of ester, thioester, amide, peptide and isopeptide bonds formed by the C-terminal Gly of ubiquitin (a 76-residue protein attached to proteins as an intracellular targeting signal).. With respect to regulation, cleavage is inhibited by ubiquitin in a dosage-dependent manner. Cleavage is blocked by ubiquitin aldehyde. Hydrolase that deubiquitinates polyubiquitinated target proteins such as MDM2, MDM4 and CCND1. Isoform 1 and isoform 2 possess both ubiquitin-specific peptidase and isopeptidase activities. Deubiquitinates MDM2 without reversing MDM2-mediated p53/TP53 ubiquitination and thus indirectly promotes p53/TP53 degradation and limits p53 activity. Has no deubiquitinase activity against p53/TP53. Prevents MDM2-mediated degradation of MDM4. Plays a role in the G1/S cell-cycle progression in normal and cancer cells. Regulates the circadian clock by modulating its intrinsic circadian rhythm and its capacity to respond to external cues. Associates with clock proteins and deubiquitinates core clock component PER1 but does not affect its overall stability. Regulates the nucleocytoplasmic shuttling and nuclear retention of PER1 and its repressive role on the clock transcription factors CLOCK and BMAL1. Plays a role in the regulation of myogenic differentiation of embryonic muscle cells. In terms of biological role, circadian clock output effector that regulates Ca(2+) absorption in the small intestine. Probably functions by regulating protein levels of the membrane scaffold protein NHERF4 in a rhythmic manner, and is therefore likely to control Ca(2+) membrane permeability mediated by the Ca(2+) channel TRPV6 in the intestine. In Rattus norvegicus (Rat), this protein is Ubiquitin carboxyl-terminal hydrolase 2 (Usp2).